A 118-amino-acid polypeptide reads, in one-letter code: Large ribosomal subunit protein bL19 (118 aa).

The protein belongs to the bacterial ribosomal protein bL19 family.

In terms of biological role, this protein is located at the 30S-50S ribosomal subunit interface and may play a role in the structure and function of the aminoacyl-tRNA binding site. The chain is Large ribosomal subunit protein bL19 from Campylobacter jejuni subsp. doylei (strain ATCC BAA-1458 / RM4099 / 269.97).